Here is a 110-residue protein sequence, read N- to C-terminus: uncharacterized protein (110 aa).

Positions 85–110 (ARKAERPSQGGKDYNGTAKSAQSTTV) are disordered. The segment covering 101 to 110 (TAKSAQSTTV) has biased composition (polar residues).

This is an uncharacterized protein from Saccharomyces cerevisiae (strain ATCC 204508 / S288c) (Baker's yeast).